A 1302-amino-acid polypeptide reads, in one-letter code: Multidrug resistance protein homolog 65 (1302 aa).

Residues 1–23 (MERDEVSTSSSEGKSQEEAPMAE) form a disordered region. Topologically, residues 1–48 (MERDEVSTSSSEGKSQEEAPMAEGLEPTEPIAFLKLFRFSTYGEIGWL) are cytoplasmic. Residues 48-369 (LFFGFIMCCI…TAPFLESFAT (322 aa)) enclose the ABC transmembrane type-1 1 domain. A helical membrane pass occupies residues 49-69 (FFGFIMCCIKALTLPAVVIIY). The Extracellular portion of the chain corresponds to 70–118 (SEFTSMLVDRAMQFGTSSNVHALPLFGGGKTLTNASREENNEALYDDSI). Residue asparagine 103 is glycosylated (N-linked (GlcNAc...) asparagine). Residues 119-147 (SYGILLTIASVVMFISGIFSVDVFNMVAL) traverse the membrane as a helical segment. At 148–194 (RQVTRMRIKLFSSVIRQDIGWHDLASKQNFTQSMVDDVEKIRDGISE) the chain is on the cytoplasmic side. Residues 195–215 (KVGHFVYLVVGFIITVAISFS) form a helical membrane-spanning segment. The Extracellular segment spans residues 216-223 (YGWKLTLA). Residues 224-242 (VSSYIPLVILLNYYVAKFQ) traverse the membrane as a helical segment. Residues 243-302 (GKLTAREQESYAGAGNLAEEILSSIRTVVSFGGEKSEVQRYENFLVPARKASQWKGAFSG) are Cytoplasmic-facing. Residues 303-323 (LSDAVLKSMLYLSCAGAFWYG) traverse the membrane as a helical segment. The Extracellular portion of the chain corresponds to 324–341 (VNLIIDDRNVENKEYTPA). The chain crosses the membrane as a helical span at residues 342 to 362 (ILMIAFFGIIVGADNIARTAP). At 363–731 (FLESFATARG…LQLAKQEWCY (369 aa)) the chain is on the cytoplasmic side. The 237-residue stretch at 405–641 (VEFQDVFFRY…EGAYYNMVRA (237 aa)) folds into the ABC transporter 1 domain. ATP is bound at residue 440-447 (GSSGCGKS). A helical membrane pass occupies residues 732–753 (LILGTISAVAVGFLYPAFAVIF). The region spanning 732–1020 (LILGTISAVA…SLAFTPAFSA (289 aa)) is the ABC transmembrane type-1 2 domain. Topologically, residues 754–776 (GEFYAALAEKDPEDALRRTAVLS) are extracellular. A helical transmembrane segment spans residues 777 to 798 (WACLGLAFLTGLVCFLQTYLFN). Residues 799 to 852 (YAGIWLTTRMRAMTFNAMVNQEVGWFDDENNSVGALSARLSGEAVDIQGAIGYP) are Cytoplasmic-facing. A helical membrane pass occupies residues 853-873 (LSGMIQALSNFISSVSVAMYY). Position 874 (asparagine 874) is a topological domain, extracellular. Residues 875-894 (WKLALLCLANCPIIVGSVIL) traverse the membrane as a helical segment. Topologically, residues 895–956 (EAKMMSNAVV…VEVLIRQKLR (62 aa)) are cytoplasmic. A helical transmembrane segment spans residues 957 to 977 (WRGVLNSTMQASAFFAYAVAL). Topologically, residues 978–993 (CYGGVLVSEGQLPFQD) are extracellular. The helical transmembrane segment at 994–1014 (IIKVSETLLYGSMMLAQSLAF) threads the bilayer. Topologically, residues 1015-1302 (TPAFSAALIA…AKLHKTQKDH (288 aa)) are cytoplasmic. The region spanning 1059–1298 (VRYRGIQFRY…GGIYAKLHKT (240 aa)) is the ABC transporter 2 domain. 1094 to 1101 (GHSGCGKS) contributes to the ATP binding site.

This sequence belongs to the ABC transporter superfamily. ABCB family. Multidrug resistance exporter (TC 3.A.1.201) subfamily.

Its subcellular location is the membrane. The enzyme catalyses ATP + H2O + xenobioticSide 1 = ADP + phosphate + xenobioticSide 2.. The polypeptide is Multidrug resistance protein homolog 65 (Mdr65) (Drosophila melanogaster (Fruit fly)).